The chain runs to 246 residues: NH(3)-dependent NAD(+) synthetase (246 aa).

29–36 lines the ATP pocket; sequence GLSGGIDS. D35 serves as a coordination point for Mg(2+). R110 contacts deamido-NAD(+). T130 serves as a coordination point for ATP. E135 is a binding site for Mg(2+). ATP contacts are provided by K159 and S181.

The protein belongs to the NAD synthetase family. Homodimer.

The catalysed reaction is deamido-NAD(+) + NH4(+) + ATP = AMP + diphosphate + NAD(+) + H(+). Its pathway is cofactor biosynthesis; NAD(+) biosynthesis; NAD(+) from deamido-NAD(+) (ammonia route): step 1/1. Catalyzes the ATP-dependent amidation of deamido-NAD to form NAD. Uses ammonia as a nitrogen source. In Campylobacter jejuni subsp. doylei (strain ATCC BAA-1458 / RM4099 / 269.97), this protein is NH(3)-dependent NAD(+) synthetase.